The chain runs to 436 residues: 3-ketoacyl-CoA thiolase (436 aa).

Residue cysteine 99 is the Acyl-thioester intermediate of the active site. Active-site proton acceptor residues include histidine 392 and cysteine 422.

The protein belongs to the thiolase-like superfamily. Thiolase family. As to quaternary structure, heterotetramer of two alpha chains (FadJ) and two beta chains (FadI).

Its subcellular location is the cytoplasm. It carries out the reaction an acyl-CoA + acetyl-CoA = a 3-oxoacyl-CoA + CoA. Its pathway is lipid metabolism; fatty acid beta-oxidation. Functionally, catalyzes the final step of fatty acid oxidation in which acetyl-CoA is released and the CoA ester of a fatty acid two carbons shorter is formed. The sequence is that of 3-ketoacyl-CoA thiolase from Shewanella halifaxensis (strain HAW-EB4).